The sequence spans 427 residues: Glutamyl-tRNA reductase (427 aa).

Substrate is bound by residues 48-51 (TCNR), serine 99, 104-106 (EDQ), and glutamine 110. Catalysis depends on cysteine 49, which acts as the Nucleophile. 179–184 (GAGEMG) is an NADP(+) binding site.

Belongs to the glutamyl-tRNA reductase family. Homodimer.

The catalysed reaction is (S)-4-amino-5-oxopentanoate + tRNA(Glu) + NADP(+) = L-glutamyl-tRNA(Glu) + NADPH + H(+). It functions in the pathway porphyrin-containing compound metabolism; protoporphyrin-IX biosynthesis; 5-aminolevulinate from L-glutamyl-tRNA(Glu): step 1/2. Its function is as follows. Catalyzes the NADPH-dependent reduction of glutamyl-tRNA(Glu) to glutamate 1-semialdehyde (GSA). This Methanocella arvoryzae (strain DSM 22066 / NBRC 105507 / MRE50) protein is Glutamyl-tRNA reductase.